The following is a 397-amino-acid chain: MEVNYDVLVIGAGPAGSSAARFAARKGLKTLLIEKRPDIGSPVRCGEGVSKSWMPEVELKPEDHWISDEVKGARIYGPSEKKPIMLTAENAGNEVGYVVERDKFDKHIAALAASEGADVWVKSPALSVIKDGNRIVGAKVRHNSEIVDVRAKMVIAADGFESEFGRWAGLKSLILAKNDIISCVEYRMINVDSDEDYTDFYLGSCAPAGYIWVFPKGKHEANVGIGVTISKMRDRFDVKNYLDAFIKSHPGYSKGKTIQLITGGVSVSKVRDKFTLPGLLTVGDAARLIDPITGGGIANGMISGKYAAEVSKKAIDNEDYSQEMMNNYERMVKDKFERKHLRNWFAKEKLGTLSDETLDKLVDVIADVKINEISVEEILKAVQLKYPELVEELESLI.

FAD contacts are provided by Ala-15, Glu-34, Cys-45, Gly-46, Gly-48, Arg-101, Ala-125, Glu-163, Asp-284, Gly-296, and Ile-297. A 2,3-bis-O-(geranylgeranyl)-sn-glycerol 1-phospholipid is bound by residues Lys-339 and Val-375.

It belongs to the geranylgeranyl reductase family. DGGGPL reductase subfamily. It depends on FAD as a cofactor.

It carries out the reaction 2,3-bis-O-(phytanyl)-sn-glycerol 1-phosphate + 8 NADP(+) = 2,3-bis-O-(geranylgeranyl)-sn-glycerol 1-phosphate + 8 NADPH + 8 H(+). The catalysed reaction is 2,3-bis-O-(phytanyl)-sn-glycerol 1-phosphate + 8 NAD(+) = 2,3-bis-O-(geranylgeranyl)-sn-glycerol 1-phosphate + 8 NADH + 8 H(+). The enzyme catalyses a 2,3-bis-O-phytanyl-sn-glycerol 1-phospholipid + 8 A = a 2,3-bis-O-(geranylgeranyl)-sn-glycerol 1-phospholipid + 8 AH2. It catalyses the reaction CDP-2,3-bis-O-(geranylgeranyl)-sn-glycerol + 8 AH2 = CDP-2,3-bis-O-(phytanyl)-sn-glycerol + 8 A. It carries out the reaction archaetidylserine + 8 AH2 = 2,3-bis-O-phytanyl-sn-glycero-3-phospho-L-serine + 8 A. Its pathway is membrane lipid metabolism; glycerophospholipid metabolism. In terms of biological role, is involved in the reduction of 2,3-digeranylgeranylglycerophospholipids (unsaturated archaeols) into 2,3-diphytanylglycerophospholipids (saturated archaeols) in the biosynthesis of archaeal membrane lipids. Catalyzes the formation of archaetidic acid (2,3-di-O-phytanyl-sn-glyceryl phosphate) from 2,3-di-O-geranylgeranylglyceryl phosphate (DGGGP) via the hydrogenation of each double bond of the isoprenoid chains. Is also probably able to reduce double bonds of geranyl groups in CDP-2,3-bis-O-(geranylgeranyl)-sn-glycerol and archaetidylserine, thus acting at various stages in the biosynthesis of archaeal membrane lipids. The polypeptide is Digeranylgeranylglycerophospholipid reductase (Picrophilus torridus (strain ATCC 700027 / DSM 9790 / JCM 10055 / NBRC 100828 / KAW 2/3)).